The chain runs to 806 residues: Fibroblast growth factor receptor 3 (806 aa).

An N-terminal signal peptide occupies residues 1 to 19; it reads MRAAWGSVWCLCLAAAVGA. Over 20 to 364 the chain is Extracellular; it reads LPAARRRGAE…ELMEMDDSGS (345 aa). Residues 24 to 124 form the Ig-like C2-type 1 domain; that stretch reads RRRGAERSGG…VLGNFTVRVT (101 aa). A disulfide bridge connects residues Cys61 and Cys107. N-linked (GlcNAc...) asparagine glycans are attached at residues Asn83, Asn96, and Asn118. Residues 121 to 146 form a disordered region; that stretch reads VRVTDSPSSGDDEDDDDESEDTGVPF. Acidic residues predominate over residues 130 to 141; sequence GDDEDDDDESED. Ig-like C2-type domains lie at 150-238 and 247-349; these read PDKM…YQLD and PILQ…AWLT. A disulfide bridge connects residues Cys170 and Cys222. 5 N-linked (GlcNAc...) asparagine glycosylation sites follow: Asn219, Asn256, Asn288, Asn309, and Asn322. Cys269 and Cys333 are joined by a disulfide. Residues 365–389 traverse the membrane as a helical segment; that stretch reads VYAGILSYGTGLVLFILVLVIVIIC. Residues 390 to 806 are Cytoplasmic-facing; the sequence is RMKMPNKKAM…HVPCNGVIRT (417 aa). One can recognise a Protein kinase domain in the interval 466-755; it reads LTLGKPLGEG…LTMTSTDEYL (290 aa). Residues 472-480 and Lys502 contribute to the ATP site; that span reads LGEGCFGQV. Asp611 serves as the catalytic Proton acceptor. Phosphotyrosine; by autocatalysis occurs at positions 641, 642, 718, and 754.

It belongs to the protein kinase superfamily. Tyr protein kinase family. Fibroblast growth factor receptor subfamily. As to quaternary structure, monomer. Homodimer after ligand binding. Autophosphorylated. Binding of FGF family members together with heparan sulfate proteoglycan or heparin promotes receptor dimerization and autophosphorylation on tyrosine residues. Autophosphorylation occurs in trans between the two FGFR molecules present in the dimer.

The protein resides in the cell membrane. The catalysed reaction is L-tyrosyl-[protein] + ATP = O-phospho-L-tyrosyl-[protein] + ADP + H(+). Its activity is regulated as follows. Present in an inactive conformation in the absence of bound ligand. Ligand binding leads to dimerization and activation by autophosphorylation on tyrosine residues. In terms of biological role, tyrosine-protein kinase that acts as a cell-surface receptor for fibroblast growth factors and plays an essential role in the regulation of cell proliferation, differentiation and apoptosis. Plays an essential role in the regulation of chondrocyte differentiation, proliferation and apoptosis, and is required for normal skeleton development. Regulates both osteogenesis and postnatal bone mineralization by osteoblasts. Promotes apoptosis in chondrocytes, but can also promote cancer cell proliferation. Phosphorylates PLCG1, CBL and FRS2. Ligand binding leads to the activation of several signaling cascades. Activation of PLCG1 leads to the production of the cellular signaling molecules diacylglycerol and inositol 1,4,5-trisphosphate. Phosphorylation of FRS2 triggers recruitment of GRB2, GAB1, PIK3R1 and SOS1, and mediates activation of RAS, MAPK1/ERK2, MAPK3/ERK1 and the MAP kinase signaling pathway, as well as of the AKT1 signaling pathway. This Gallus gallus (Chicken) protein is Fibroblast growth factor receptor 3 (FGFR3).